A 229-amino-acid chain; its full sequence is Aspartate-rich protein 1 (229 aa).

Positions 84–106 are disordered; the sequence is SEEDNDDAKILPSPVQGSSEDNL.

In Homo sapiens (Human), this protein is Aspartate-rich protein 1 (DRICH1).